The following is a 101-amino-acid chain: uncharacterized protein (101 aa).

A run of 2 helical transmembrane segments spans residues Val-52–Leu-72 and Leu-75–Gly-95.

It is found in the endoplasmic reticulum membrane. This is an uncharacterized protein from Schizosaccharomyces pombe (strain 972 / ATCC 24843) (Fission yeast).